The chain runs to 290 residues: Lectin-related protein (290 aa).

A signal peptide spans 1-36 (ANSNSRPHLLQTQKPFSVVLAISITFYLLLLNKVNS). N-linked (GlcNAc...) asparagine glycosylation is found at asparagine 119, asparagine 147, and asparagine 152. 2 residues coordinate Mn(2+): glutamate 161 and aspartate 163. Ca(2+) is bound by residues aspartate 163, asparagine 167, and aspartate 170. Mn(2+) contacts are provided by aspartate 170 and histidine 175.

It belongs to the leguminous lectin family. Homotetramer.

Does not have any carbohydrate binding or agglutination activity. The sequence is that of Lectin-related protein from Cladrastis kentukea (Yellow wood).